The chain runs to 153 residues: SsrA-binding protein (153 aa).

The disordered stretch occupies residues 131-153 (EYDKRDSIRERDDRREMDRAFKR).

The protein belongs to the SmpB family.

Its subcellular location is the cytoplasm. Required for rescue of stalled ribosomes mediated by trans-translation. Binds to transfer-messenger RNA (tmRNA), required for stable association of tmRNA with ribosomes. tmRNA and SmpB together mimic tRNA shape, replacing the anticodon stem-loop with SmpB. tmRNA is encoded by the ssrA gene; the 2 termini fold to resemble tRNA(Ala) and it encodes a 'tag peptide', a short internal open reading frame. During trans-translation Ala-aminoacylated tmRNA acts like a tRNA, entering the A-site of stalled ribosomes, displacing the stalled mRNA. The ribosome then switches to translate the ORF on the tmRNA; the nascent peptide is terminated with the 'tag peptide' encoded by the tmRNA and targeted for degradation. The ribosome is freed to recommence translation, which seems to be the essential function of trans-translation. The sequence is that of SsrA-binding protein from Parabacteroides distasonis (strain ATCC 8503 / DSM 20701 / CIP 104284 / JCM 5825 / NCTC 11152).